The chain runs to 122 residues: Holo-[acyl-carrier-protein] synthase (122 aa).

The Mg(2+) site is built by aspartate 9 and glutamate 58.

This sequence belongs to the P-Pant transferase superfamily. AcpS family. The cofactor is Mg(2+).

The protein resides in the cytoplasm. The catalysed reaction is apo-[ACP] + CoA = holo-[ACP] + adenosine 3',5'-bisphosphate + H(+). Its function is as follows. Transfers the 4'-phosphopantetheine moiety from coenzyme A to a Ser of acyl-carrier-protein. This chain is Holo-[acyl-carrier-protein] synthase, found in Chlamydia felis (strain Fe/C-56) (Chlamydophila felis).